We begin with the raw amino-acid sequence, 257 residues long: Zinc finger protein 8 (257 aa).

Disordered regions lie at residues 48-92, 108-128, and 214-238; these read GDNS…NNNN, QALGGHQNAHKRERQHAKRGS, and GVYSSSPASAFRSHEQETNKEPNNW. Positions 50–65 are enriched in polar residues; that stretch reads NSDNLSAEPSDHQTTT. Positions 66–92 are enriched in basic and acidic residues; that stretch reads KNDESSENIKDKDKEKDKDKDKDNNNN. The segment at 95–117 adopts a C2H2-type zinc-finger fold; that stretch reads FECHYCFRNFPTSQALGGHQNAH. The segment covering 115–126 has biased composition (basic residues); it reads NAHKRERQHAKR.

In terms of tissue distribution, expressed in developing cauline leaves.

It is found in the nucleus. Probable transcription factor required for the initiation of inflorescence trichomes in response to gibberellin and cytokinin. Is not involved in the regulation of trichome branching. Is functionally equivalent to GIS2. Acts as a negative regulator of abscisic acid (ABA) signaling during germination and early seedling development. This is Zinc finger protein 8 from Arabidopsis thaliana (Mouse-ear cress).